Here is a 258-residue protein sequence, read N- to C-terminus: Distal membrane-arm assembly complex protein 2 (258 aa).

This sequence belongs to the ATP synthase subunit s family. Interacts with incompletely assembled mitochondrial NADH:ubiquinone oxidoreductase complex (complex I).

The protein resides in the mitochondrion. Its function is as follows. Required for the assembly of the mitochondrial NADH:ubiquinone oxidoreductase complex (complex I). Involved in the assembly of the distal region of complex I. The polypeptide is Distal membrane-arm assembly complex protein 2 (Dmac2) (Mus musculus (Mouse)).